The chain runs to 320 residues: Nicotianamine synthase 1 (320 aa).

The protein belongs to the nicotianamine synthase (NAS)-like family. In shoots and roots.

It carries out the reaction 3 S-adenosyl-L-methionine = nicotianamine + 3 S-methyl-5'-thioadenosine + 3 H(+). Functionally, synthesizes nicotianamine, a polyamine which serves as a sensor for the physiological iron status within the plant, and/or might be involved in the transport of iron. The protein is Nicotianamine synthase 1 (NAS1) of Arabidopsis thaliana (Mouse-ear cress).